The primary structure comprises 169 residues: Co-chaperone protein HscB homolog (169 aa).

Residues 2-74 (NYFDLFSLPV…CLRAQYLLLL (73 aa)) form the J domain.

Belongs to the HscB family. In terms of assembly, interacts with HscA and stimulates its ATPase activity.

Co-chaperone involved in the maturation of iron-sulfur cluster-containing proteins. Seems to help targeting proteins to be folded toward HscA. The polypeptide is Co-chaperone protein HscB homolog (Psychromonas ingrahamii (strain DSM 17664 / CCUG 51855 / 37)).